Reading from the N-terminus, the 209-residue chain is Ion-translocating oxidoreductase complex subunit G (209 aa).

Residues 9 to 29 (GLILAVFACVSTGLVALTYAL) traverse the membrane as a helical segment. Position 175 is an FMN phosphoryl threonine (T175).

Belongs to the RnfG family. In terms of assembly, the complex is composed of six subunits: RnfA, RnfB, RnfC, RnfD, RnfE and RnfG. It depends on FMN as a cofactor.

It localises to the cell inner membrane. In terms of biological role, part of a membrane-bound complex that couples electron transfer with translocation of ions across the membrane. The sequence is that of Ion-translocating oxidoreductase complex subunit G from Vibrio cholerae serotype O1 (strain ATCC 39315 / El Tor Inaba N16961).